The primary structure comprises 393 residues: 1-deoxy-D-xylulose 5-phosphate reductoisomerase (393 aa).

Residues Thr10, Gly11, Ser12, Ile13, Arg37, Gln38, and Asn124 each contribute to the NADPH site. Lys125 contacts 1-deoxy-D-xylulose 5-phosphate. Glu126 lines the NADPH pocket. Mn(2+) is bound at residue Asp150. Positions 151, 152, 179, and 202 each coordinate 1-deoxy-D-xylulose 5-phosphate. Glu152 contributes to the Mn(2+) binding site. Gly208 is a binding site for NADPH. 1-deoxy-D-xylulose 5-phosphate-binding residues include Ser215, Asn220, Lys221, and Glu224. A Mn(2+)-binding site is contributed by Glu224.

The protein belongs to the DXR family. The cofactor is Mg(2+). Mn(2+) serves as cofactor.

The catalysed reaction is 2-C-methyl-D-erythritol 4-phosphate + NADP(+) = 1-deoxy-D-xylulose 5-phosphate + NADPH + H(+). The protein operates within isoprenoid biosynthesis; isopentenyl diphosphate biosynthesis via DXP pathway; isopentenyl diphosphate from 1-deoxy-D-xylulose 5-phosphate: step 1/6. Catalyzes the NADPH-dependent rearrangement and reduction of 1-deoxy-D-xylulose-5-phosphate (DXP) to 2-C-methyl-D-erythritol 4-phosphate (MEP). The polypeptide is 1-deoxy-D-xylulose 5-phosphate reductoisomerase (Cupriavidus necator (strain ATCC 17699 / DSM 428 / KCTC 22496 / NCIMB 10442 / H16 / Stanier 337) (Ralstonia eutropha)).